The sequence spans 237 residues: MGYLQLMGFGPDGWGSDMLRATGMTVAVASSAFTIGLVFGCLGATASFSKSLALQAAASSYTTALRGIPDLLVIYLFYFGSSSLISGVGSLFGSDGFVSAPAFLTGALAIGLVSAAYQTQVLRGAVLALNKGEIEAGRAYGMGYFLLFRRIILPQAARHALPGVGNVWQLVLKESALISVIGLVELMRQAQVGSGSTRQPFSFYLTAAALYLLITFISGQAFRLAEARSMRGLRRGV.

An ABC transmembrane type-1 domain is found at 22–222; that stretch reads TGMTVAVASS…LITFISGQAF (201 aa). Transmembrane regions (helical) follow at residues 24–44, 72–92, 96–116, and 201–221; these read MTVA…CLGA, LVIY…GSLF, GFVS…VSAA, and FSFY…SGQA.

It belongs to the binding-protein-dependent transport system permease family. HisMQ subfamily.

The protein resides in the cell inner membrane. Component of the octopine active transport system probably consisting of four subunits: Q, M, P and T. This chain is Octopine transport system permease protein OccQ (occQ), found in Rhizobium meliloti (Ensifer meliloti).